Here is a 590-residue protein sequence, read N- to C-terminus: Beta-fructofuranosidase, cell wall isozyme (590 aa).

An N-terminal signal peptide occupies residues 1–28; the sequence is MGTRPRGVVLAPWAVVLVLVLALRLAGA. D68 is a catalytic residue. N-linked (GlcNAc...) asparagine glycosylation is found at N190 and N341.

Belongs to the glycosyl hydrolase 32 family.

The protein localises to the secreted. It localises to the cell wall. The catalysed reaction is Hydrolysis of terminal non-reducing beta-D-fructofuranoside residues in beta-D-fructofuranosides.. The polypeptide is Beta-fructofuranosidase, cell wall isozyme (Zea mays (Maize)).